The sequence spans 229 residues: Large ribosomal subunit protein uL1 (229 aa).

Belongs to the universal ribosomal protein uL1 family. As to quaternary structure, part of the 50S ribosomal subunit.

In terms of biological role, binds directly to 23S rRNA. The L1 stalk is quite mobile in the ribosome, and is involved in E site tRNA release. Its function is as follows. Protein L1 is also a translational repressor protein, it controls the translation of the L11 operon by binding to its mRNA. This is Large ribosomal subunit protein uL1 from Flavobacterium johnsoniae (strain ATCC 17061 / DSM 2064 / JCM 8514 / BCRC 14874 / CCUG 350202 / NBRC 14942 / NCIMB 11054 / UW101) (Cytophaga johnsonae).